We begin with the raw amino-acid sequence, 473 residues long: Photosystem II CP43 reaction center protein (473 aa).

Residues 1–14 constitute a propeptide that is removed on maturation; sequence MKTLYSLRRFYHVE. At Thr15 the chain carries N-acetylthreonine. Position 15 is a phosphothreonine (Thr15). A run of 5 helical transmembrane segments spans residues 69-93, 134-155, 178-200, 255-275, and 291-312; these read LFEV…PHLA, LLGP…KDRN, KALY…RKIA, KPFA…LSYS, and WFNN…ASQA. Glu367 provides a ligand contact to [CaMn4O5] cluster. A helical transmembrane segment spans residues 447 to 471; the sequence is RARAAAAGFEKGIDRDFEPVLSMTP.

This sequence belongs to the PsbB/PsbC family. PsbC subfamily. As to quaternary structure, PSII is composed of 1 copy each of membrane proteins PsbA, PsbB, PsbC, PsbD, PsbE, PsbF, PsbH, PsbI, PsbJ, PsbK, PsbL, PsbM, PsbT, PsbX, PsbY, PsbZ, Psb30/Ycf12, at least 3 peripheral proteins of the oxygen-evolving complex and a large number of cofactors. It forms dimeric complexes. Binds multiple chlorophylls and provides some of the ligands for the Ca-4Mn-5O cluster of the oxygen-evolving complex. It may also provide a ligand for a Cl- that is required for oxygen evolution. PSII binds additional chlorophylls, carotenoids and specific lipids. serves as cofactor.

The protein resides in the plastid membrane. Functionally, one of the components of the core complex of photosystem II (PSII). It binds chlorophyll and helps catalyze the primary light-induced photochemical processes of PSII. PSII is a light-driven water:plastoquinone oxidoreductase, using light energy to abstract electrons from H(2)O, generating O(2) and a proton gradient subsequently used for ATP formation. The protein is Photosystem II CP43 reaction center protein of Cuscuta exaltata (Tall dodder).